A 203-amino-acid chain; its full sequence is ATP phosphoribosyltransferase (203 aa).

This sequence belongs to the ATP phosphoribosyltransferase family. Short subfamily. Heteromultimer composed of HisG and HisZ subunits.

It is found in the cytoplasm. It catalyses the reaction 1-(5-phospho-beta-D-ribosyl)-ATP + diphosphate = 5-phospho-alpha-D-ribose 1-diphosphate + ATP. It participates in amino-acid biosynthesis; L-histidine biosynthesis; L-histidine from 5-phospho-alpha-D-ribose 1-diphosphate: step 1/9. Catalyzes the condensation of ATP and 5-phosphoribose 1-diphosphate to form N'-(5'-phosphoribosyl)-ATP (PR-ATP). Has a crucial role in the pathway because the rate of histidine biosynthesis seems to be controlled primarily by regulation of HisG enzymatic activity. The polypeptide is ATP phosphoribosyltransferase (Campylobacter fetus subsp. fetus (strain 82-40)).